Here is a 125-residue protein sequence, read N- to C-terminus: Phosphoribosyl-AMP cyclohydrolase (125 aa).

Aspartate 74 provides a ligand contact to Mg(2+). Cysteine 75 is a Zn(2+) binding site. The Mg(2+) site is built by aspartate 76 and aspartate 78. The Zn(2+) site is built by cysteine 92 and cysteine 99.

Belongs to the PRA-CH family. In terms of assembly, homodimer. It depends on Mg(2+) as a cofactor. The cofactor is Zn(2+).

Its subcellular location is the cytoplasm. It catalyses the reaction 1-(5-phospho-beta-D-ribosyl)-5'-AMP + H2O = 1-(5-phospho-beta-D-ribosyl)-5-[(5-phospho-beta-D-ribosylamino)methylideneamino]imidazole-4-carboxamide. It functions in the pathway amino-acid biosynthesis; L-histidine biosynthesis; L-histidine from 5-phospho-alpha-D-ribose 1-diphosphate: step 3/9. Its function is as follows. Catalyzes the hydrolysis of the adenine ring of phosphoribosyl-AMP. The polypeptide is Phosphoribosyl-AMP cyclohydrolase (Desulfatibacillum aliphaticivorans).